A 137-amino-acid chain; its full sequence is Large ribosomal subunit protein uL16 (137 aa).

This sequence belongs to the universal ribosomal protein uL16 family. In terms of assembly, part of the 50S ribosomal subunit.

Its function is as follows. Binds 23S rRNA and is also seen to make contacts with the A and possibly P site tRNAs. This Leptospira biflexa serovar Patoc (strain Patoc 1 / Ames) protein is Large ribosomal subunit protein uL16.